Here is a 408-residue protein sequence, read N- to C-terminus: G patch domain-containing protein 4 (408 aa).

M1 is subject to N-acetylmethionine. T4 bears the Phosphothreonine mark. The 47-residue stretch at 11 to 57 (GMKFAEEQLLKHGWTQGKGLGRKENGITQALRVTLKQDTYGVGHDPA) folds into the G-patch domain. A Glycyl lysine isopeptide (Lys-Gly) (interchain with G-Cter in SUMO2) cross-link involves residue K46. T116 carries the post-translational modification Phosphothreonine. Disordered regions lie at residues 116–141 (TSSG…KPPN) and 187–408 (GQDP…KKRD). 2 positions are modified to phosphoserine: S128 and S130. 3 stretches are compositionally biased toward basic and acidic residues: residues 222 to 236 (RSAE…ESIR), 245 to 257 (HQEE…REGT), and 274 to 283 (LKNREHVDRS). Over residues 340–354 (EEDLNTEDEEVEEAL) the composition is skewed to acidic residues. The segment covering 358–372 (GTREAESRSCSDQKR) has biased composition (basic and acidic residues). Over residues 398–408 (KAKKKKQKKRD) the composition is skewed to basic residues.

In Bos taurus (Bovine), this protein is G patch domain-containing protein 4 (GPATCH4).